Reading from the N-terminus, the 691-residue chain is Calcium-binding and coiled-coil domain-containing protein 1 (691 aa).

The tract at residues 1 to 30 (MEESPLSRAPSRGGVNFLNVARTYIPNTKV) is p300 KIX-binding. Residues 1-190 (MEESPLSRAP…VQELERALAT (190 aa)) form an N-terminal AD (CTNNB1 binding site) region. Ser4 bears the Phosphoserine mark. Residues 45–125 (SDWIGIFKVE…FQFREPRPMD (81 aa)) are interaction with GATA1. Coiled-coil stretches lie at residues 145 to 205 (KATV…YKGI), 232 to 339 (ELED…AELE), and 417 to 514 (QSVE…ADEK). The C-terminal AD (CTNNB1 binding site); interaction with CCAR1 stretch occupies residues 501-691 (RKLEARLEKV…FSTQDPFTFE (191 aa)). The disordered stretch occupies residues 514-606 (KWNEDATTED…SEAEDEKSVL (93 aa)). A UBZ1-type zinc finger spans residues 653 to 679 (WKECPICKERFPAESDKDALEDHMDGH). Residues Cys656, Cys659, His675, and His679 each coordinate Zn(2+).

The protein belongs to the CALCOCO family. Part of a calphoglin complex consisting of CALCOCO1, PPA1 and PGM. Interacts with the bHLH-PAS domains of GRIP1, AHR and ARNT. Interacts with CTNNB1 via both its N- and C-terminal regions. Interacts with EP300. Interacts with CCAR1 (via N-terminus) and GATA1.

The protein resides in the cytoplasm. Its subcellular location is the nucleus. Functions as a coactivator for aryl hydrocarbon and nuclear receptors (NR). Recruited to promoters through its contact with the N-terminal basic helix-loop-helix-Per-Arnt-Sim (PAS) domain of transcription factors or coactivators, such as NCOA2. During ER-activation acts synergistically in combination with other NCOA2-binding proteins, such as EP300, CREBBP and CARM1. Involved in the transcriptional activation of target genes in the Wnt/CTNNB1 pathway. Functions as a secondary coactivator in LEF1-mediated transcriptional activation via its interaction with CTNNB1. Coactivator function for nuclear receptors and LEF1/CTNNB1 involves differential utilization of two different activation regions. In association with CCAR1 enhances GATA1- and MED1-mediated transcriptional activation from the gamma-globin promoter during erythroid differentiation of K562 erythroleukemia cells. In terms of biological role, seems to enhance inorganic pyrophosphatase thus activating phosphogluomutase (PMG). Probably functions as a component of the calphoglin complex, which is involved in linking cellular metabolism (phosphate and glucose metabolism) with other core functions including protein synthesis and degradation, calcium signaling and cell growth. This chain is Calcium-binding and coiled-coil domain-containing protein 1 (CALCOCO1), found in Homo sapiens (Human).